A 505-amino-acid chain; its full sequence is Circadian clock protein KaiC3 (505 aa).

KaiC domains are found at residues 10-252 (EKLE…KSSD) and 253-485 (IRIT…LAGT). S423 carries the post-translational modification Phosphoserine; by autocatalysis. T424 carries the phosphothreonine; by autocatalysis modification.

Belongs to the KaiC family. In terms of assembly, multimerizes, probably forming homohexamers, no interaction with KaiC1 or KaiC2 is seen. In another study forms hexamers, interacts with KaiB1, KaiB3, and KaiC1. Post-translationally, autophosphorylates and dephosphorylates. Dephosphorylation of KaiC3 was higher at 25 than at 30 or 35 degrees Celsius.

It carries out the reaction L-seryl-[protein] + ATP = O-phospho-L-seryl-[protein] + ADP + H(+). The catalysed reaction is L-threonyl-[protein] + ATP = O-phospho-L-threonyl-[protein] + ADP + H(+). The enzyme catalyses ATP + H2O = ADP + phosphate + H(+). ATPase activity is influenced by KaiB1 and KaiB3 in vitro; ATPase is reduced 35% by the KaiB1 tetramer and 55% by the KaiB3 monomer but not affected by KaiA or the KaiB3 tetramer. Seems to be linked to dark adaption of Synechocystis cells, but is not as essential as the core oscillator KaiAB1C1 for the circadian cycle. KaiB3 and KaiC3 may cross talk with the core oscillator. Autophosphorylates and dephosphorylates independently of KaiA. Has a weak ATPase, hydrolyzes 8.5 ATP/monomer/day, has no detectable ATP synthesis activity. ATPase activity reduced 55% by KaiB3 monomer but not the KaiB3 tetramer or KaiA in vitro, reduced 35% by KaiB1 tetramer. The polypeptide is Circadian clock protein KaiC3 (Synechocystis sp. (strain ATCC 27184 / PCC 6803 / Kazusa)).